The following is a 495-amino-acid chain: UDP-N-acetylmuramoyl-L-alanyl-D-glutamate--2,6-diaminopimelate ligase (495 aa).

UDP-N-acetyl-alpha-D-muramoyl-L-alanyl-D-glutamate contacts are provided by residues leucine 27, serine 29, and 44-46; that span reads HQA. 116–122 serves as a coordination point for ATP; that stretch reads GTNGKTT. Residues asparagine 157, 158 to 159, serine 185, glutamine 191, and arginine 193 contribute to the UDP-N-acetyl-alpha-D-muramoyl-L-alanyl-D-glutamate site; that span reads TT. At lysine 225 the chain carries N6-carboxylysine. Residues arginine 390, 414–417, glycine 465, and glutamate 469 contribute to the meso-2,6-diaminopimelate site; that span reads DNPR. Residues 414-417 carry the Meso-diaminopimelate recognition motif motif; that stretch reads DNPR.

The protein belongs to the MurCDEF family. MurE subfamily. The cofactor is Mg(2+). Carboxylation is probably crucial for Mg(2+) binding and, consequently, for the gamma-phosphate positioning of ATP.

The protein localises to the cytoplasm. The enzyme catalyses UDP-N-acetyl-alpha-D-muramoyl-L-alanyl-D-glutamate + meso-2,6-diaminopimelate + ATP = UDP-N-acetyl-alpha-D-muramoyl-L-alanyl-gamma-D-glutamyl-meso-2,6-diaminopimelate + ADP + phosphate + H(+). Its pathway is cell wall biogenesis; peptidoglycan biosynthesis. In terms of biological role, catalyzes the addition of meso-diaminopimelic acid to the nucleotide precursor UDP-N-acetylmuramoyl-L-alanyl-D-glutamate (UMAG) in the biosynthesis of bacterial cell-wall peptidoglycan. The protein is UDP-N-acetylmuramoyl-L-alanyl-D-glutamate--2,6-diaminopimelate ligase of Salmonella paratyphi A (strain ATCC 9150 / SARB42).